The following is a 253-amino-acid chain: Ubiquinone/menaquinone biosynthesis C-methyltransferase UbiE (253 aa).

S-adenosyl-L-methionine-binding positions include Thr76, Asp97, and 125–126 (NA).

This sequence belongs to the class I-like SAM-binding methyltransferase superfamily. MenG/UbiE family.

It catalyses the reaction a 2-demethylmenaquinol + S-adenosyl-L-methionine = a menaquinol + S-adenosyl-L-homocysteine + H(+). The enzyme catalyses a 2-methoxy-6-(all-trans-polyprenyl)benzene-1,4-diol + S-adenosyl-L-methionine = a 5-methoxy-2-methyl-3-(all-trans-polyprenyl)benzene-1,4-diol + S-adenosyl-L-homocysteine + H(+). It functions in the pathway quinol/quinone metabolism; menaquinone biosynthesis; menaquinol from 1,4-dihydroxy-2-naphthoate: step 2/2. The protein operates within cofactor biosynthesis; ubiquinone biosynthesis. Functionally, methyltransferase required for the conversion of demethylmenaquinol (DMKH2) to menaquinol (MKH2) and the conversion of 2-polyprenyl-6-methoxy-1,4-benzoquinol (DDMQH2) to 2-polyprenyl-3-methyl-6-methoxy-1,4-benzoquinol (DMQH2). The protein is Ubiquinone/menaquinone biosynthesis C-methyltransferase UbiE of Stenotrophomonas maltophilia (strain K279a).